The chain runs to 59 residues: Bacteriocin curvacin-A (59 aa).

The propeptide occupies 1 to 18 (MNNVKELSMTELQTITGG). C28 and C33 are disulfide-bonded.

This sequence belongs to the bacteriocin class IIA/YGNGV family.

The protein resides in the secreted. Its function is as follows. Bactericidal activity; inhibits closely related Lactobacilli, Listeria monocytogenes and ivanovvi, Enterococcus faecalis, Carnobacterium sp and Brocothrix thermosphacta. This is Bacteriocin curvacin-A (curA) from Latilactobacillus curvatus (Lactobacillus curvatus).